The following is a 95-amino-acid chain: Small ribosomal subunit protein bS6 (95 aa).

Belongs to the bacterial ribosomal protein bS6 family. In terms of assembly, part of the 30S ribosomal subunit.

Its function is as follows. Binds together with bS18 to 16S ribosomal RNA. In Bacillus subtilis (strain 168), this protein is Small ribosomal subunit protein bS6 (rpsF).